A 215-amino-acid polypeptide reads, in one-letter code: Pyrrolidone-carboxylate peptidase (215 aa).

Residues Glu-78, Cys-141, and His-165 contribute to the active site.

It belongs to the peptidase C15 family. In terms of assembly, homotetramer.

The protein localises to the cytoplasm. The enzyme catalyses Release of an N-terminal pyroglutamyl group from a polypeptide, the second amino acid generally not being Pro.. In terms of biological role, removes 5-oxoproline from various penultimate amino acid residues except L-proline. The protein is Pyrrolidone-carboxylate peptidase of Streptococcus pyogenes serotype M3 (strain SSI-1).